We begin with the raw amino-acid sequence, 636 residues long: MNEINVTLPDGSQRPLPAGASIFDLAASIGAGLAKAAIAGKIDGNLVDLNTPLADGARVEIVTEKSPEALEIIRHSTSHLMAQAVKALFPQAKVTIGPAIETGFYYDFDVDHPFTPEDLEKIEEKMRELAKADLKIERRELTSADAIALFKGMGEDYKVELIEDLGADKVSLYSQGDFVDLCRGPHLPKTSYIKAFKLTSIAGAYWRGDEKRAMLQRVYGTAFGDKKELEAYLARIEEAKKRDHRKLGRELDLFSFNDEVGAGLVIWHPKGAMLRTILEDFERKEHLKRGYDIVLGPQILKTELWQRSGHYENYRENMYFTTVDEQSYGVKPMNCLAHMMIYRSQLRSYRDLPLRYFELGTVHRHERAGVLHGLLRVRGFTQDDAHILCTPDQLDAEIKGVIQFVTEVMGIFGFEFEMELSTRPEKSIGSDDAWELATSALLNALKDSGRPYEINEGDGAFYGPKIDIKLRDALDRRWQCATIQCDFTLPERFDLTYVDADGEKKRPVMVHRVILGAIERFIGVLIEHFAGNFPTWLAPVQATIVTVTDNQIPYAQAAFDKLRAAGIRVQKDFRNEKLGFKIREAQLQKIPYMLVVGDKEVESGMLAPRFRDGKNLESMTPEQFITFIENEVKSYK.

The TGS domain occupies 1-63; it reads MNEINVTLPD…ADGARVEIVT (63 aa). Residues 243–534 form a catalytic region; it reads DHRKLGRELD…LIEHFAGNFP (292 aa). Zn(2+) is bound by residues cysteine 335, histidine 386, and histidine 511.

The protein belongs to the class-II aminoacyl-tRNA synthetase family. Homodimer. Zn(2+) is required as a cofactor.

The protein resides in the cytoplasm. The enzyme catalyses tRNA(Thr) + L-threonine + ATP = L-threonyl-tRNA(Thr) + AMP + diphosphate + H(+). Functionally, catalyzes the attachment of threonine to tRNA(Thr) in a two-step reaction: L-threonine is first activated by ATP to form Thr-AMP and then transferred to the acceptor end of tRNA(Thr). Also edits incorrectly charged L-seryl-tRNA(Thr). In Geobacter sp. (strain M21), this protein is Threonine--tRNA ligase.